Consider the following 466-residue polypeptide: CCA-adding enzyme (466 aa).

ATP-binding residues include serine 55 and arginine 58. The CTP site is built by serine 55 and arginine 58. Residues aspartate 67, aspartate 69, and aspartate 118 each contribute to the Mg(2+) site. ATP is bound by residues histidine 141, lysine 161, and tyrosine 170. Residues histidine 141, lysine 161, and tyrosine 170 each coordinate CTP.

Belongs to the tRNA nucleotidyltransferase/poly(A) polymerase family. Archaeal CCA-adding enzyme subfamily. As to quaternary structure, homodimer. Mg(2+) serves as cofactor.

The enzyme catalyses a tRNA precursor + 2 CTP + ATP = a tRNA with a 3' CCA end + 3 diphosphate. It carries out the reaction a tRNA with a 3' CCA end + 2 CTP + ATP = a tRNA with a 3' CCACCA end + 3 diphosphate. Catalyzes the addition and repair of the essential 3'-terminal CCA sequence in tRNAs without using a nucleic acid template. Adds these three nucleotides in the order of C, C, and A to the tRNA nucleotide-73, using CTP and ATP as substrates and producing inorganic pyrophosphate. tRNA 3'-terminal CCA addition is required both for tRNA processing and repair. Also involved in tRNA surveillance by mediating tandem CCA addition to generate a CCACCA at the 3' terminus of unstable tRNAs. While stable tRNAs receive only 3'-terminal CCA, unstable tRNAs are marked with CCACCA and rapidly degraded. The chain is CCA-adding enzyme from Haloarcula marismortui (strain ATCC 43049 / DSM 3752 / JCM 8966 / VKM B-1809) (Halobacterium marismortui).